A 273-amino-acid polypeptide reads, in one-letter code: Phosphatidylglycerol--prolipoprotein diacylglyceryl transferase (273 aa).

The next 3 membrane-spanning stretches (helical) occupy residues 20 to 40 (LAVR…LPIA), 59 to 79 (FLFY…VLFY), and 97 to 117 (GGMS…YFSW). Residue Arg-142 participates in a 1,2-diacyl-sn-glycero-3-phospho-(1'-sn-glycerol) binding. A run of 2 helical transmembrane segments spans residues 206-226 (FGFL…FCEF) and 243-263 (MGQL…VYAM).

The protein belongs to the Lgt family.

The protein localises to the cell inner membrane. The catalysed reaction is L-cysteinyl-[prolipoprotein] + a 1,2-diacyl-sn-glycero-3-phospho-(1'-sn-glycerol) = an S-1,2-diacyl-sn-glyceryl-L-cysteinyl-[prolipoprotein] + sn-glycerol 1-phosphate + H(+). It functions in the pathway protein modification; lipoprotein biosynthesis (diacylglyceryl transfer). Its function is as follows. Catalyzes the transfer of the diacylglyceryl group from phosphatidylglycerol to the sulfhydryl group of the N-terminal cysteine of a prolipoprotein, the first step in the formation of mature lipoproteins. This Gluconobacter oxydans (strain 621H) (Gluconobacter suboxydans) protein is Phosphatidylglycerol--prolipoprotein diacylglyceryl transferase.